We begin with the raw amino-acid sequence, 709 residues long: Ral guanine nucleotide dissociation stimulator-like 3 (709 aa).

A disordered region spans residues 26–55 (VYSVSLRRQRSQRSTPERSGEGQTPIPATD). In terms of domain architecture, N-terminal Ras-GEF spans 64–201 (KVRALRAARL…LLEDFLKEAK (138 aa)). 3 disordered regions span residues 203–225 (EQTE…TPGS), 395–416 (SQEE…KLPP), and 502–604 (PPAA…SRVP). Residues 248-503 (SVDDVAEQLT…YRVSRVIEPP (256 aa)) enclose the Ras-GEF domain. Low complexity-rich tracts occupy residues 502–511 (PPAASCPSSP) and 533–551 (SSPG…SVSP). Ser506 and Ser510 each carry phosphoserine. A compositionally biased stretch (pro residues) spans 552 to 576 (GSPPSSPRNREPPPPGSPPASPGPQ). 5 positions are modified to phosphoserine: Ser553, Ser568, Ser572, Ser577, and Ser600. Residues 611–706 (SEARVIRVSI…KEGTGHTLSA (96 aa)) are interaction with HRAS, MRAS and RIT1. One can recognise a Ras-associating domain in the interval 612–699 (EARVIRVSIN…GDFLLRRKEG (88 aa)).

Interacts with GTP-bound forms of RIT1, HRAS and MRAS. In terms of tissue distribution, widely expressed. Expressed at high levels in the liver and kidney.

Functionally, guanine nucleotide exchange factor (GEF) for Ral-A. Potential effector of GTPase HRas and Ras-related protein M-Ras. Negatively regulates Elk-1-dependent gene induction downstream of HRas and MEKK1. The protein is Ral guanine nucleotide dissociation stimulator-like 3 (Rgl3) of Mus musculus (Mouse).